The primary structure comprises 381 residues: Creatine kinase B-type (381 aa).

A Phosphagen kinase N-terminal domain is found at 11–98 (KMKYSVDDEY…FDPVIEDRHG (88 aa)). Valine 72 contributes to the creatine binding site. A Phosphagen kinase C-terminal domain is found at 125–367 (YVLSSRVRTG…KLLIEMEKRL (243 aa)). ATP contacts are provided by residues 128–132 (SSRVR), arginine 130, arginine 132, and histidine 191. Glutamate 232 provides a ligand contact to creatine. ATP is bound at residue arginine 236. A Phosphothreonine; by autocatalysis modification is found at threonine 282. Serine 285 contributes to the creatine binding site. A Phosphoserine; by autocatalysis modification is found at serine 285. Threonine 289 carries the phosphothreonine; by autocatalysis modification. ATP contacts are provided by residues arginine 292, arginine 320, 320 to 325 (RGTGGV), and aspartate 335.

The protein belongs to the ATP:guanido phosphotransferase family. Dimer of identical or non-identical chains, which can be either B (brain type) or M (muscle type). With MM being the major form in skeletal muscle and myocardium, MB existing in myocardium, and BB existing in many tissues, especially brain. Ba-CK and Bb-CK are phosphorylated. In terms of processing, the N-terminus of BA-CK is blocked. As to expression, expressed in almost all tissues and found enriched in various region of the brain, retina, heart, gizzard, gut and sperm.

The protein resides in the cytoplasm. It localises to the cytosol. The protein localises to the mitochondrion. It is found in the cell membrane. It carries out the reaction creatine + ATP = N-phosphocreatine + ADP + H(+). Functionally, reversibly catalyzes the transfer of phosphate between ATP and various phosphogens (e.g. creatine phosphate). Creatine kinase isoenzymes play a central role in energy transduction in tissues with large, fluctuating energy demands, such as skeletal muscle, heart, brain and spermatozoa. The polypeptide is Creatine kinase B-type (Gallus gallus (Chicken)).